A 610-amino-acid chain; its full sequence is DNA mismatch repair protein MutL (610 aa).

Belongs to the DNA mismatch repair MutL/HexB family.

Functionally, this protein is involved in the repair of mismatches in DNA. It is required for dam-dependent methyl-directed DNA mismatch repair. May act as a 'molecular matchmaker', a protein that promotes the formation of a stable complex between two or more DNA-binding proteins in an ATP-dependent manner without itself being part of a final effector complex. The protein is DNA mismatch repair protein MutL of Rickettsia africae (strain ESF-5).